The following is a 442-amino-acid chain: 3-isopropylmalate dehydratase large subunit (442 aa).

[4Fe-4S] cluster is bound by residues cysteine 347, cysteine 407, and cysteine 410.

This sequence belongs to the aconitase/IPM isomerase family. LeuC type 1 subfamily. In terms of assembly, heterodimer of LeuC and LeuD. It depends on [4Fe-4S] cluster as a cofactor.

It catalyses the reaction (2R,3S)-3-isopropylmalate = (2S)-2-isopropylmalate. It functions in the pathway amino-acid biosynthesis; L-leucine biosynthesis; L-leucine from 3-methyl-2-oxobutanoate: step 2/4. Its function is as follows. Catalyzes the isomerization between 2-isopropylmalate and 3-isopropylmalate, via the formation of 2-isopropylmaleate. The protein is 3-isopropylmalate dehydratase large subunit of Buchnera aphidicola subsp. Uroleucon solidaginis.